The primary structure comprises 444 residues: Argininosuccinate synthase (444 aa).

ATP contacts are provided by residues 18-26 (AFSGGLDTS) and Ala44. Tyr100 provides a ligand contact to L-citrulline. Residues Gly130 and Thr132 each coordinate ATP. L-aspartate contacts are provided by Thr132, Asn136, and Asp137. Position 136 (Asn136) interacts with L-citrulline. Asp137 serves as a coordination point for ATP. Positions 140 and 193 each coordinate L-citrulline. Asp195 lines the ATP pocket. Positions 202, 204, and 281 each coordinate L-citrulline.

It belongs to the argininosuccinate synthase family. Type 2 subfamily. As to quaternary structure, homotetramer.

The protein localises to the cytoplasm. It catalyses the reaction L-citrulline + L-aspartate + ATP = 2-(N(omega)-L-arginino)succinate + AMP + diphosphate + H(+). It functions in the pathway amino-acid biosynthesis; L-arginine biosynthesis; L-arginine from L-ornithine and carbamoyl phosphate: step 2/3. The protein is Argininosuccinate synthase of Histophilus somni (strain 129Pt) (Haemophilus somnus).